The following is a 603-amino-acid chain: uncharacterized protein (603 aa).

Residues 496–513 (EEEDQEEDDTSDDDDQEK) are compositionally biased toward acidic residues. Disordered regions lie at residues 496–536 (EEED…GSLE) and 549–568 (AVAE…DTAQ). The segment covering 517–533 (NPQNNIGSLTRTPSSPG) has biased composition (polar residues).

This sequence belongs to the herpesviridae US22 family.

This is an uncharacterized protein from Human cytomegalovirus (strain AD169) (HHV-5).